The sequence spans 32 residues: Islet amyloid polypeptide (32 aa).

Belongs to the calcitonin family. In terms of assembly, can form homodimers. Interacts with IDE and INS. Interaction with INS inhibits homodimerization and fibril formation.

It localises to the secreted. In terms of biological role, amylin/IAPP is a glucoregulatory peptide hormone that plays an important role in the regulation of energy homeostasis. Selectively inhibits insulin-stimulated glucose utilization and glycogen deposition in muscle, while not affecting adipocyte glucose metabolism. IAPP function is mediated by the CALCR-RAMPs (AMYRs) receptor complexes. Amylin can also bind CALCR receptor in the absence of RAMPs, although it is more selective for AMYRs. The sequence is that of Islet amyloid polypeptide (IAPP) from Ovis aries (Sheep).